The primary structure comprises 395 residues: Phosphonoacetaldehyde reductase (395 aa).

Residues D199, H268, and H282 each coordinate Fe cation.

Belongs to the iron-containing alcohol dehydrogenase family. Fe cation is required as a cofactor.

It carries out the reaction 2-hydroxyethylphosphonate + NAD(+) = phosphonoacetaldehyde + NADH + H(+). Its pathway is secondary metabolite biosynthesis; bialaphos biosynthesis. Its function is as follows. Catalyzes the reduction of phosphonoacetaldehyde to 2-hydroxyethylphosphonate, a step in the biosynthesis of phosphinothricin tripeptide. Phosphinothricin tripeptide (PTT), also known as bialaphos (BA), is a natural-product antibiotic and potent herbicide. Can use both NAD and NADP but the preferred substrate is NAD. This Streptomyces viridochromogenes (strain DSM 40736 / JCM 4977 / BCRC 1201 / Tue 494) protein is Phosphonoacetaldehyde reductase (phpC).